A 454-amino-acid chain; its full sequence is Probable DNA primase large subunit (454 aa).

Cysteine 280, cysteine 359, cysteine 375, and cysteine 415 together coordinate [4Fe-4S] cluster.

This sequence belongs to the eukaryotic-type primase large subunit family. In terms of assembly, heterodimer of a small subunit and a large subunit. [4Fe-4S] cluster is required as a cofactor.

In terms of biological role, DNA primase is the polymerase that synthesizes small RNA primers for the Okazaki fragments made during discontinuous DNA replication. The protein is Probable DNA primase large subunit of Arabidopsis thaliana (Mouse-ear cress).